We begin with the raw amino-acid sequence, 659 residues long: uncharacterized protein (659 aa).

Transmembrane regions (helical) follow at residues 24-44 (TTLMVAGLLGNVVAVAAYGLF), 71-91 (FGASLSSALCLGALIYFVMMV), 115-135 (IGWLAFALTMVVVQAANDSGV), 157-177 (RAWIVVTICALLVTLTLRVII), 183-203 (FVLLIPAVIGVIATAVTGNAG), 214-234 (AVIVFALAIAALSGLKITAAL), 242-262 (AVLIVQVVCGVLALAYGAELV), 279-299 (LGLVAGVLVTLVCFSDCWALV), 311-331 (LTALAMMAVTAATAAMSVQTA), 365-385 (FDSLIGATAIVLGIGYVAGFV), 393-413 (TWPVGRLVAWLTGCVALVFTS), 433-453 (MTLNMFIPVLLVLGGPVTLAL), 490-510 (FILFVGSPYIVYFTPLFDTLV), 517-537 (EFMAIHFLLVGYIFYWAIIGI), 550-570 (IGLLFAVMPFHAFFGIALMTM), and 596-616 (IGGAIAWSATELPVIIVIVAL).

The protein to M.tuberculosis Rv0102.

The protein resides in the cell membrane. This is an uncharacterized protein from Mycobacterium leprae (strain TN).